The chain runs to 226 residues: Protein pdh1 (226 aa).

Positions 1 to 26 (MNHFSKFSVTKRLLILEVLFSAISFG) are cleaved as a signal peptide. The Extracellular portion of the chain corresponds to 27–41 (ISIYIKVFGRSSIVT). A helical transmembrane segment spans residues 42–62 (FFLLCFHLVPNALFLFPWTII). Topologically, residues 63–65 (TTS) are cytoplasmic. A helical transmembrane segment spans residues 66 to 86 (FVDANVFTLLSSILILSVYGV). Topologically, residues 87-97 (EIERSWGHKEY) are extracellular. The helical transmembrane segment at 98-118 (LLFCQFLTVIPNIAVLIPCFI) threads the bilayer. Topologically, residues 119 to 191 (AYKITDSHYL…VFQSFPWTYF (73 aa)) are cytoplasmic. Residues 192–212 (CLAVSGTCISELYVLFVHPVV) traverse the membrane as a helical segment. The Extracellular portion of the chain corresponds to 213–226 (QELFHLESHTQLPI).

The protein resides in the membrane. This is Protein pdh1 (pdh1) from Schizosaccharomyces pombe (strain 972 / ATCC 24843) (Fission yeast).